A 497-amino-acid polypeptide reads, in one-letter code: Gasdermin-E (497 aa).

The interval 1-56 is membrane targeting domain; that stretch reads MFAKATRSFLREVDAEGDLIAVSNLNDSDKSQLLSLVTKKKRFWCWQRPKYQFLSV. C45 carries the post-translational modification S-(2-succinyl)cysteine. Residue K120 forms a Glycyl lysine isopeptide (Lys-Gly) (interchain with G-Cter in ubiquitin) linkage. S-(2-succinyl)cysteine occurs at positions 156, 168, and 180. K189 is covalently cross-linked (Glycyl lysine isopeptide (Lys-Gly) (interchain with G-Cter in ubiquitin)). An S-(2-succinyl)cysteine mark is found at C235, C371, C409, C418, and C491.

The protein belongs to the gasdermin family. Homooligomer; homooligomeric ring-shaped pore complex containing 27-28 subunits when inserted in the membrane. Cleavage at Asp-270 by CASP3 (mature and uncleaved precursor forms) or granzyme B (GZMB) relieves autoinhibition and is sufficient to initiate pyroptosis. In terms of processing, succination by the Krebs cycle intermediate fumarate, which leads to S-(2-succinyl)cysteine residues, inhibits processing by caspases, and ability to initiate pyroptosis. Succination modification is catalyzed by a non-enzymatic reaction caused by an accumulation of fumarate. Post-translationally, ubiquitinated on Lys-120 and Lys-189 via 'Lys-48'-linked polyubiquitin chains, leading to proteasomal degradation. Deubiquitinated by USP48, leading to increased stability. Palmitoylated.

The protein resides in the cell membrane. It is found in the cytoplasm. It localises to the cytosol. With respect to regulation, the full-length protein before cleavage is inactive: intramolecular interactions between N- and C-terminal domains mediate autoinhibition in the absence of activation signal. The intrinsic pyroptosis-inducing activity is carried by the released N-terminal moiety (Gasdermin-E, N-terminal) following cleavage by CASP3 or granzyme B (GZMB). Activated by NLRP1 in the absence of GSDMD expression: NLRP1 cleaves and activates CASP8, promoting downstream activation of CASP3 and subsequent activation of GSDME. In terms of biological role, precursor of a pore-forming protein that converts non-inflammatory apoptosis to pyroptosis. This form constitutes the precursor of the pore-forming protein: upon cleavage, the released N-terminal moiety (Gasdermin-E, N-terminal) binds to membranes and forms pores, triggering pyroptosis. Pore-forming protein produced by cleavage by CASP3 or granzyme B (GZMB), which converts non-inflammatory apoptosis to pyroptosis or promotes granzyme-mediated pyroptosis, respectively. After cleavage, moves to the plasma membrane, homooligomerizes within the membrane and forms pores of 10-15 nanometers (nm) of inner diameter, allowing the release of mature interleukins (IL1B and IL16) and triggering pyroptosis. Binds to inner leaflet lipids, bisphosphorylated phosphatidylinositols, such as phosphatidylinositol (4,5)-bisphosphate. Cleavage by CASP3 switches CASP3-mediated apoptosis induced by TNF or danger signals, such as chemotherapy drugs, to pyroptosis. Mediates secondary necrosis downstream of the mitochondrial apoptotic pathway and CASP3 activation as well as in response to viral agents. Exhibits bactericidal activity. Cleavage by GZMB promotes tumor suppressor activity by triggering robust anti-tumor immunity. Suppresses tumors by mediating granzyme-mediated pyroptosis in target cells of natural killer (NK) cells: cleavage by granzyme B (GZMB), delivered to target cells from NK-cells, triggers pyroptosis of tumor cells and tumor suppression. May play a role in the p53/TP53-regulated cellular response to DNA damage. In Equus caballus (Horse), this protein is Gasdermin-E.